The primary structure comprises 523 residues: GMP synthase [glutamine-hydrolyzing] (523 aa).

Residues 8–205 (KILILDFGSQ…VVNICGCTTN (198 aa)) form the Glutamine amidotransferase type-1 domain. C85 (nucleophile) is an active-site residue. Residues H179 and E181 contribute to the active site. The GMPS ATP-PPase domain occupies 206-398 (WTPENIIEDA…LGLPAEMLNR (193 aa)). 233–239 (SGGVDSS) contacts ATP.

As to quaternary structure, homodimer.

The catalysed reaction is XMP + L-glutamine + ATP + H2O = GMP + L-glutamate + AMP + diphosphate + 2 H(+). The protein operates within purine metabolism; GMP biosynthesis; GMP from XMP (L-Gln route): step 1/1. Catalyzes the synthesis of GMP from XMP. The protein is GMP synthase [glutamine-hydrolyzing] of Mannheimia succiniciproducens (strain KCTC 0769BP / MBEL55E).